Here is a 522-residue protein sequence, read N- to C-terminus: MTRFAVLPLSVLLLVLLFLCTESLAKSEESEEYDVAVPSCCGFSSPLLIKKDQWKPIFETKFGQISTVQIGNGCGGMGPYKIHSITLEPNTILLPLLLHSDMVFFVDSGSGILNWVDEEAKSTEIRLGDVYRLRPGSVFYLQSKPVDIFLGTKLKLYAIFSNNDECLHDPCFGAYSSITDLMFGFDETILQSAFGVPEGIIELMRNRTKPPLIVSETLCTPGVANTWQLQPRLLKLFAGSADLVDNKKKKEKKEKKEKVKKAKTFNVFESEPDFESPYGRTITINRKDLKVLKGSMVGVSMVNLTQGSMMGPHWNPWACEISIVLKGAGMVRVLRSSISSNTSSECKNVRFKVEEGDIFAVPRLHPMAQMSFNNDSLVFVGFTTSAKNNEPQFLAGEDSALRMLDRQVLAASLNVSSVTIDGLLGAQKEAVILECHSCAEGEIEKLKVEIERKKIDDERKRRHDERKKEEEEAKREEEERRKREEEEEKKRWPPQQPPQEEELRERQLPMEKEWEMEGEEES.

The first 25 residues, 1–25 (MTRFAVLPLSVLLLVLLFLCTESLA), serve as a signal peptide directing secretion. Asn206, Asn303, Asn341, Asn374, and Asn414 each carry an N-linked (GlcNAc...) asparagine glycan. The 157-residue stretch at 265–421 (FNVFESEPDF…SLNVSSVTID (157 aa)) folds into the Cupin type-1 domain. Residues 457-522 (DERKRRHDER…EWEMEGEEES (66 aa)) form a disordered region. 2 stretches are compositionally biased toward basic and acidic residues: residues 466 to 491 (RKKE…EKKR) and 501 to 515 (EELR…KEWE).

The protein belongs to the 7S seed storage protein family.

Its function is as follows. Seed storage protein. The polypeptide is Vicilin-like seed storage protein At4g36700 (Arabidopsis thaliana (Mouse-ear cress)).